The following is an 873-amino-acid chain: Alanine--tRNA ligase (873 aa).

4 residues coordinate Zn(2+): H559, H563, C661, and H665.

It belongs to the class-II aminoacyl-tRNA synthetase family. Requires Zn(2+) as cofactor.

Its subcellular location is the cytoplasm. The catalysed reaction is tRNA(Ala) + L-alanine + ATP = L-alanyl-tRNA(Ala) + AMP + diphosphate. Catalyzes the attachment of alanine to tRNA(Ala) in a two-step reaction: alanine is first activated by ATP to form Ala-AMP and then transferred to the acceptor end of tRNA(Ala). Also edits incorrectly charged Ser-tRNA(Ala) and Gly-tRNA(Ala) via its editing domain. The chain is Alanine--tRNA ligase from Acaryochloris marina (strain MBIC 11017).